A 91-amino-acid polypeptide reads, in one-letter code: Cell division protein FtsB (91 aa).

The Cytoplasmic segment spans residues 1–3 (MKF). A helical membrane pass occupies residues 4–21 (IVGLLLVLLLALQYQLWI). The Periplasmic segment spans residues 22 to 91 (SKDGLGELRQ…ETFFQVVEEP (70 aa)). A coiled-coil region spans residues 26 to 74 (LGELRQLSRSIKQQRHENATLIERNQVLKAEVQDLKSGLDALEERARSG).

It belongs to the FtsB family. In terms of assembly, part of a complex composed of FtsB, FtsL and FtsQ.

It localises to the cell inner membrane. Essential cell division protein. May link together the upstream cell division proteins, which are predominantly cytoplasmic, with the downstream cell division proteins, which are predominantly periplasmic. This Nitrosococcus oceani (strain ATCC 19707 / BCRC 17464 / JCM 30415 / NCIMB 11848 / C-107) protein is Cell division protein FtsB.